The following is a 238-amino-acid chain: 1-(5-phosphoribosyl)-5-[(5-phosphoribosylamino)methylideneamino] imidazole-4-carboxamide isomerase (238 aa).

The active-site Proton acceptor is aspartate 8. The Proton donor role is filled by aspartate 129.

Belongs to the HisA/HisF family.

The protein resides in the cytoplasm. The catalysed reaction is 1-(5-phospho-beta-D-ribosyl)-5-[(5-phospho-beta-D-ribosylamino)methylideneamino]imidazole-4-carboxamide = 5-[(5-phospho-1-deoxy-D-ribulos-1-ylimino)methylamino]-1-(5-phospho-beta-D-ribosyl)imidazole-4-carboxamide. Its pathway is amino-acid biosynthesis; L-histidine biosynthesis; L-histidine from 5-phospho-alpha-D-ribose 1-diphosphate: step 4/9. The polypeptide is 1-(5-phosphoribosyl)-5-[(5-phosphoribosylamino)methylideneamino] imidazole-4-carboxamide isomerase (Clostridium kluyveri (strain NBRC 12016)).